Consider the following 83-residue polypeptide: Small integral membrane protein 22 (83 aa).

The chain crosses the membrane as a helical span at residues 32 to 52; sequence VAFIVFLTFMGTVLLLLLLVV. Residues 60–83 are disordered; it reads SPGPRRESPRKERPKGVDNLALEP. Residues 63-75 are compositionally biased toward basic and acidic residues; sequence PRRESPRKERPKG.

As to quaternary structure, interacts with CANX and DDOST. Interacts with SQLE; this interaction modulates lipid droplet formation.

It is found in the membrane. It localises to the late endosome. In terms of biological role, may modulate lipid droplet formation throught interaction with SQLE. The polypeptide is Small integral membrane protein 22 (Homo sapiens (Human)).